Reading from the N-terminus, the 876-residue chain is Valine--tRNA ligase (876 aa).

Residues Pro44–His54 carry the 'HIGH' region motif. Residues Lys520 to Ser524 carry the 'KMSKS' region motif. ATP is bound at residue Lys523. Residues Leu805–Ala876 are a coiled coil.

This sequence belongs to the class-I aminoacyl-tRNA synthetase family. ValS type 1 subfamily. In terms of assembly, monomer.

Its subcellular location is the cytoplasm. The catalysed reaction is tRNA(Val) + L-valine + ATP = L-valyl-tRNA(Val) + AMP + diphosphate. In terms of biological role, catalyzes the attachment of valine to tRNA(Val). As ValRS can inadvertently accommodate and process structurally similar amino acids such as threonine, to avoid such errors, it has a 'posttransfer' editing activity that hydrolyzes mischarged Thr-tRNA(Val) in a tRNA-dependent manner. The sequence is that of Valine--tRNA ligase from Staphylococcus aureus (strain Mu3 / ATCC 700698).